The chain runs to 212 residues: 2-dehydro-3-deoxy-phosphogluconate aldolase (212 aa).

The active-site Proton acceptor is glutamate 45. Pyruvate-binding residues include arginine 49, threonine 73, and lysine 133. Lysine 133 (schiff-base intermediate with substrate) is an active-site residue.

It belongs to the KHG/KDPG aldolase family. Homotrimer.

Its subcellular location is the cytoplasm. It carries out the reaction 2-dehydro-3-deoxy-6-phospho-D-gluconate = D-glyceraldehyde 3-phosphate + pyruvate. It functions in the pathway carbohydrate acid metabolism; 2-dehydro-3-deoxy-D-gluconate degradation; D-glyceraldehyde 3-phosphate and pyruvate from 2-dehydro-3-deoxy-D-gluconate: step 2/2. Involved in the degradation of glucose via the Entner-Doudoroff pathway. Catalyzes the reversible, stereospecific retro-aldol cleavage of 2-keto-3-deoxy-6-phosphogluconate (KDPG) to pyruvate and D-glyceraldehyde-3-phosphate. This chain is 2-dehydro-3-deoxy-phosphogluconate aldolase (eda), found in Haemophilus influenzae (strain ATCC 51907 / DSM 11121 / KW20 / Rd).